A 258-amino-acid polypeptide reads, in one-letter code: Adenylate kinase (258 aa).

52 to 57 (GAGKGT) lines the ATP pocket. Residues 72–101 (ATGDMLRSQVAKKTALGKEAKKIMDQGGLV) are NMP. Residues T73, R78, 99–101 (GLV), 128–131 (GFPR), and Q135 contribute to the AMP site. The segment at 169-206 (GRLVHPASGRSYHKIFNPPKEEMKDDVTGEPLIQRSDD) is LID. Residues R170 and 179 to 180 (SY) each bind ATP. 2 residues coordinate AMP: R203 and R214. Q242 provides a ligand contact to ATP.

Belongs to the adenylate kinase family. AK2 subfamily. In terms of assembly, monomer.

The protein localises to the cytoplasm. Its subcellular location is the cytosol. It is found in the mitochondrion intermembrane space. It carries out the reaction AMP + ATP = 2 ADP. Its function is as follows. Catalyzes the reversible transfer of the terminal phosphate group between ATP and AMP. Plays an important role in cellular energy homeostasis and in adenine nucleotide metabolism. Adenylate kinase activity is critical for regulation of the phosphate utilization and the AMP de novo biosynthesis pathways. This Aspergillus niger (strain ATCC MYA-4892 / CBS 513.88 / FGSC A1513) protein is Adenylate kinase (adk1).